Consider the following 283-residue polypeptide: Diaminopimelate epimerase (283 aa).

Substrate is bound by residues asparagine 13, glutamine 45, and asparagine 65. The Proton donor role is filled by cysteine 74. Residues 75–76 (GN), asparagine 156, asparagine 190, and 208–209 (ER) each bind substrate. Catalysis depends on cysteine 217, which acts as the Proton acceptor. 218 to 219 (GS) provides a ligand contact to substrate.

It belongs to the diaminopimelate epimerase family. In terms of assembly, homodimer.

It is found in the cytoplasm. It carries out the reaction (2S,6S)-2,6-diaminopimelate = meso-2,6-diaminopimelate. Its pathway is amino-acid biosynthesis; L-lysine biosynthesis via DAP pathway; DL-2,6-diaminopimelate from LL-2,6-diaminopimelate: step 1/1. Catalyzes the stereoinversion of LL-2,6-diaminopimelate (L,L-DAP) to meso-diaminopimelate (meso-DAP), a precursor of L-lysine and an essential component of the bacterial peptidoglycan. This is Diaminopimelate epimerase from Bartonella quintana (strain Toulouse) (Rochalimaea quintana).